The primary structure comprises 304 residues: Homoserine kinase (304 aa).

90–100 (PLARGLGSSAS) is a binding site for ATP.

Belongs to the GHMP kinase family. Homoserine kinase subfamily.

It localises to the cytoplasm. It carries out the reaction L-homoserine + ATP = O-phospho-L-homoserine + ADP + H(+). It functions in the pathway amino-acid biosynthesis; L-threonine biosynthesis; L-threonine from L-aspartate: step 4/5. Functionally, catalyzes the ATP-dependent phosphorylation of L-homoserine to L-homoserine phosphate. The polypeptide is Homoserine kinase (Staphylococcus aureus (strain MSSA476)).